The following is a 345-amino-acid chain: Phosphoribosylformylglycinamidine cyclo-ligase (345 aa).

The protein belongs to the AIR synthase family.

It localises to the cytoplasm. The catalysed reaction is 2-formamido-N(1)-(5-O-phospho-beta-D-ribosyl)acetamidine + ATP = 5-amino-1-(5-phospho-beta-D-ribosyl)imidazole + ADP + phosphate + H(+). It functions in the pathway purine metabolism; IMP biosynthesis via de novo pathway; 5-amino-1-(5-phospho-D-ribosyl)imidazole from N(2)-formyl-N(1)-(5-phospho-D-ribosyl)glycinamide: step 2/2. This is Phosphoribosylformylglycinamidine cyclo-ligase from Aeromonas salmonicida (strain A449).